A 288-amino-acid polypeptide reads, in one-letter code: Bifunctional protein FolD (288 aa).

Residues 166-168 (GAS) and Ile-232 contribute to the NADP(+) site.

Belongs to the tetrahydrofolate dehydrogenase/cyclohydrolase family. Homodimer.

It catalyses the reaction (6R)-5,10-methylene-5,6,7,8-tetrahydrofolate + NADP(+) = (6R)-5,10-methenyltetrahydrofolate + NADPH. The enzyme catalyses (6R)-5,10-methenyltetrahydrofolate + H2O = (6R)-10-formyltetrahydrofolate + H(+). The protein operates within one-carbon metabolism; tetrahydrofolate interconversion. Catalyzes the oxidation of 5,10-methylenetetrahydrofolate to 5,10-methenyltetrahydrofolate and then the hydrolysis of 5,10-methenyltetrahydrofolate to 10-formyltetrahydrofolate. The polypeptide is Bifunctional protein FolD (Escherichia fergusonii (strain ATCC 35469 / DSM 13698 / CCUG 18766 / IAM 14443 / JCM 21226 / LMG 7866 / NBRC 102419 / NCTC 12128 / CDC 0568-73)).